Reading from the N-terminus, the 600-residue chain is Spore coat protein SP96 (600 aa).

Positions 21-140 (QSCSSYSGDN…DVCQCKGGQT (120 aa)) constitute a DSCP-N domain. Positions 139–178 (QTSGGSTTGSQTSGGSTSGGSTTGSQTSGGSTTGSQTSGS) are disordered. Positions 161–178 (TGSQTSGGSTTGSQTSGS) are enriched in low complexity. 6 consecutive Follistatin-like domains span residues 184–206 (SCSN…AVCV), 220–243 (PCDT…AKCT), 267–289 (LCDN…AKCI), 297–319 (VCRN…PICV), 331–359 (TCND…AKCC), and 394–416 (PCSV…AVCL). The tract at residues 420–530 (TTTTGSTSDS…ASSSSASSSS (111 aa)) is disordered.

Glycosylated; may contain fucose and GlcNAc-alpha-1-P-Ser.

It is found in the spore wall. The chain is Spore coat protein SP96 (cotA) from Dictyostelium discoideum (Social amoeba).